The chain runs to 556 residues: Phospholipase D (556 aa).

The signal sequence occupies residues 1–47 (MTSDQRPARLPTHKGKLLAPHRLHRLIPVSVALTTVCAALPSSTAYA). Residues 210–237 (SLSWNHSKLLVVDGKTAITGGINGWKDD) enclose the PLD phosphodiesterase 1 domain. The interval 326–360 (SDPSSGYHPDLPTAPDTKCTVGLHDNTNADRDYDT) is disordered. One can recognise a PLD phosphodiesterase 2 domain in the interval 484-511 (KPYALHHKLVSVDDSAFYIGSKNLYPAW).

This sequence belongs to the phospholipase D family. Post-translationally, probably has at least 1 disulfide bond.

The protein localises to the secreted. It carries out the reaction a 1,2-diacyl-sn-glycero-3-phosphocholine + H2O = a 1,2-diacyl-sn-glycero-3-phosphate + choline + H(+). Inhibited by mercaptoethanol and dithiothreitol. A reversible phospholipase active on phosphatidylcholine (PC) and phosphatidylethanolamine. Lysophosphatidylcholine and egg sphingomyelin are hydrolyzed about 50 times and 100 times more slowly than PC, respectively. During the transphosphatidylation reaction straight-chain hydroxy compounds, such as triethyleneglycol and triethyleneglycol monomethyl ether, were phosphatidylated in good yield, as were monosaccharides. Disaccharides and sugar alcohol reacted slowly, while N-acetyl-D-galactosamine, D-galactosamine and D-galacturonic acid were not phosphatidylated. This chain is Phospholipase D, found in Streptomyces antibioticus.